Consider the following 198-residue polypeptide: Recombination protein RecR (198 aa).

The C4-type zinc-finger motif lies at 57 to 72 (CSECQTLTDKDPCAVC). The 96-residue stretch at 80–175 (RIICVVEGVP…KVTRIAQGIP (96 aa)) folds into the Toprim domain.

Belongs to the RecR family.

Its function is as follows. May play a role in DNA repair. It seems to be involved in an RecBC-independent recombinational process of DNA repair. It may act with RecF and RecO. This chain is Recombination protein RecR, found in Anaeromyxobacter sp. (strain Fw109-5).